Reading from the N-terminus, the 817-residue chain is Dolichyl-phosphate-mannose--protein mannosyltransferase 1 (817 aa).

N-acetylserine is present on Ser-2. At 2–50 (SEEKTYKRVEQDDPVPELDIKQGPVRPFIVTDPSAELASLRTMVTLKEK) the chain is on the cytoplasmic side. A helical transmembrane segment spans residues 51-70 (LLVACLAVFTAVIRLHGLAW). The Lumenal portion of the chain corresponds to 71–135 (PDSVVFDEVH…DSFPSTTPYV (65 aa)). The chain crosses the membrane as a helical span at residues 136–154 (LMRFFSASLGALTVILMYM). The Cytoplasmic segment spans residues 155–179 (TLRYSGVRMWVALMSAICFAVENSY). Residues 180–200 (VTISRYILLDAPLMFFIAAAV) form a helical membrane-spanning segment. The Lumenal portion of the chain corresponds to 201 to 234 (YSFKKYEMYPANSLNAYKSLLATGIALGMASSSK). Residues 235-259 (WVGLFTVTWVGLLCIWRLWFMIGDL) traverse the membrane as a helical segment. Residues 260–273 (TKSSKSIFKVAFAK) are Cytoplasmic-facing. The helical transmembrane segment at 274–291 (LAFLLGVPFALYLVFFYI) threads the bilayer. The Lumenal portion of the chain corresponds to 292–584 (HFQSLTLDGD…GENNRNVYLL (293 aa)). MIR domains follow at residues 324-378 (VADV…LELY), 388-448 (FQNL…VEID), and 459-514 (ERVI…VENN). N-linked (GlcNAc...) asparagine glycans are attached at residues Asn-390 and Asn-513. The chain crosses the membrane as a helical span at residues 585-605 (GNAIVWWAVTAFIGIFGLIVI). Residues 606–685 (TELFSWQLGK…SYVFRSKRQM (80 aa)) lie on the Cytoplasmic side of the membrane. A helical membrane pass occupies residues 686–710 (GYAVVITFLAASVYFFKSFSPIIYG). Topologically, residues 711-817 (TPWTQELCQK…LKVEKRAVLE (107 aa)) are lumenal. Asn-743 carries an N-linked (GlcNAc...) asparagine glycan.

It belongs to the glycosyltransferase 39 family. As to quaternary structure, PMT1 and PMT2 form a functional heterodimer. The complex interacts with endoplasmic reticulum proteins EMP24, ERV25, ERP1, ERP2, CDC48, HRD1, USA1, YOS9, ERO1, PDI1, UBR1, Cue4, DFM1 and TED1. Forms also a minor complex with PMT3.

Its subcellular location is the endoplasmic reticulum membrane. The enzyme catalyses a di-trans,poly-cis-dolichyl beta-D-mannosyl phosphate + L-seryl-[protein] = 3-O-(alpha-D-mannosyl)-L-seryl-[protein] + a di-trans,poly-cis-dolichyl phosphate + H(+). The catalysed reaction is a di-trans,poly-cis-dolichyl beta-D-mannosyl phosphate + L-threonyl-[protein] = 3-O-(alpha-D-mannosyl)-L-threonyl-[protein] + a di-trans,poly-cis-dolichyl phosphate + H(+). The protein operates within protein modification; protein glycosylation. Functionally, protein O-mannosyltransferase involved in O-glycosylation which is essential for cell wall rigidity. Forms a heterodimeric complex with PMT2 and more rarely with PMT3 to transfer mannose from Dol-P-mannose to Ser or Thr residues on proteins. The PMT1-PMT2 complex participates in oxidative protein folding, ER-associated protein degradation (ERAD), as well as ER export. Required for incorporation of proteins in the cell wall. The polypeptide is Dolichyl-phosphate-mannose--protein mannosyltransferase 1 (Saccharomyces cerevisiae (strain ATCC 204508 / S288c) (Baker's yeast)).